The chain runs to 100 residues: Large ribosomal subunit protein bL28 (100 aa).

The segment at 1-25 is disordered; the sequence is MTRRCDITGKSVLSGNNVSHANNKS. Positions 11-22 are enriched in polar residues; sequence SVLSGNNVSHAN.

It belongs to the bacterial ribosomal protein bL28 family.

This chain is Large ribosomal subunit protein bL28, found in Acidiphilium cryptum (strain JF-5).